Here is a 51-residue protein sequence, read N- to C-terminus: Sperm protamine P1 (51 aa).

The segment covering 1–13 (MARYRCCRSQSRS) has biased composition (low complexity). The segment at 1–30 (MARYRCCRSQSRSRYYRQRQRSRRRRRRSC) is disordered. Positions 14–30 (RYYRQRQRSRRRRRRSC) are enriched in basic residues. A disulfide bridge connects residues C40 and C48.

The protein belongs to the protamine P1 family. Cross-linked by interchain disulfide bonds around the DNA-helix. Post-translationally, phosphorylated by SRPK1. Testis.

The protein localises to the nucleus. It localises to the chromosome. Functionally, protamines substitute for histones in the chromatin of sperm during the haploid phase of spermatogenesis. They compact sperm DNA into a highly condensed, stable and inactive complex. The polypeptide is Sperm protamine P1 (PRM1) (Homo sapiens (Human)).